Here is a 506-residue protein sequence, read N- to C-terminus: Galactose/methyl galactoside import ATP-binding protein MglA (506 aa).

2 ABC transporter domains span residues L14–S249 and N259–L506. G46 to S53 contacts ATP.

Belongs to the ABC transporter superfamily. Galactose/methyl galactoside importer (TC 3.A.1.2.3) family. In terms of assembly, the complex is composed of one ATP-binding protein (MglA), two transmembrane proteins (MglC) and a solute-binding protein (MglB).

Its subcellular location is the cell inner membrane. The catalysed reaction is D-galactose(out) + ATP + H2O = D-galactose(in) + ADP + phosphate + H(+). It carries out the reaction methyl beta-D-galactoside(out) + ATP + H2O = methyl beta-D-galactoside(in) + ADP + phosphate + H(+). With respect to regulation, stimulated 3-fold by galactose and inhibited by vanadate, N-ethylmaleimide, and 5-methoxyindole-2-carboxylic acid. Functionally, part of the ABC transporter complex MglABC involved in galactose/methyl galactoside import. Responsible for energy coupling to the transport system. The sequence is that of Galactose/methyl galactoside import ATP-binding protein MglA from Salmonella typhimurium (strain LT2 / SGSC1412 / ATCC 700720).